Consider the following 197-residue polypeptide: GTP cyclohydrolase-2 (197 aa).

50–54 (RIHSE) contacts GTP. 3 residues coordinate Zn(2+): Cys-55, Cys-66, and Cys-68. Residues Gln-71, 93 to 95 (EGR), and Thr-115 each bind GTP. Asp-127 acts as the Proton acceptor in catalysis. Residue Arg-129 is the Nucleophile of the active site. Positions 150 and 155 each coordinate GTP.

The protein belongs to the GTP cyclohydrolase II family. Requires Zn(2+) as cofactor.

The enzyme catalyses GTP + 4 H2O = 2,5-diamino-6-hydroxy-4-(5-phosphoribosylamino)-pyrimidine + formate + 2 phosphate + 3 H(+). The protein operates within cofactor biosynthesis; riboflavin biosynthesis; 5-amino-6-(D-ribitylamino)uracil from GTP: step 1/4. In terms of biological role, catalyzes the conversion of GTP to 2,5-diamino-6-ribosylamino-4(3H)-pyrimidinone 5'-phosphate (DARP), formate and pyrophosphate. The polypeptide is GTP cyclohydrolase-2 (Neisseria meningitidis serogroup A / serotype 4A (strain DSM 15465 / Z2491)).